The sequence spans 754 residues: 5-methyltetrahydropteroyltriglutamate--homocysteine methyltransferase (754 aa).

5-methyltetrahydropteroyltri-L-glutamate is bound by residues 17-20 (RELK) and Lys-117. Residues 431-433 (IGS) and Glu-484 each bind L-homocysteine. Residues 431–433 (IGS) and Glu-484 each bind L-methionine. Residues 515–516 (RC) and Trp-561 contribute to the 5-methyltetrahydropteroyltri-L-glutamate site. An L-homocysteine-binding site is contributed by Asp-599. Asp-599 contacts L-methionine. Glu-605 lines the 5-methyltetrahydropteroyltri-L-glutamate pocket. 3 residues coordinate Zn(2+): His-641, Cys-643, and Glu-665. His-694 acts as the Proton donor in catalysis. Zn(2+) is bound at residue Cys-726.

Belongs to the vitamin-B12 independent methionine synthase family. The cofactor is Zn(2+).

The catalysed reaction is 5-methyltetrahydropteroyltri-L-glutamate + L-homocysteine = tetrahydropteroyltri-L-glutamate + L-methionine. It functions in the pathway amino-acid biosynthesis; L-methionine biosynthesis via de novo pathway; L-methionine from L-homocysteine (MetE route): step 1/1. In terms of biological role, catalyzes the transfer of a methyl group from 5-methyltetrahydrofolate to homocysteine resulting in methionine formation. In Salmonella arizonae (strain ATCC BAA-731 / CDC346-86 / RSK2980), this protein is 5-methyltetrahydropteroyltriglutamate--homocysteine methyltransferase.